Reading from the N-terminus, the 318-residue chain is Magnetosome protein MamM (318 aa).

Residues 1–210 (MRKSGCTVCS…FMDAYRGLMD (210 aa)) form a transmembrane domain (TMD) region. The next 4 helical transmembrane spans lie at 13 to 33 (IGWV…FVGL), 39 to 59 (AMLA…MVVI), 81 to 101 (FILS…LLVH), and 117 to 137 (LIVL…YFYS). The C-terminal domain (CTD) stretch occupies residues 211–318 (HTAGEAVQNR…DEVMLSKVDN (108 aa)). Residues Asp249, His264, His285, and Glu289 each coordinate Fe cation.

The protein belongs to the cation diffusion facilitator (CDF) transporter (TC 2.A.4) family. In terms of assembly, forms homodimers via its C-terminal domain (CTD) in the presence of metal cations. Interacts with MamB via their CTD.

The protein resides in the magnetosome membrane. It localises to the cell inner membrane. Its function is as follows. Probably plays a role in biomineralization. Required for stable accumulation of MamB. Probably binds and transports iron. May nucleate iron crystal formation. This chain is Magnetosome protein MamM (mamM), found in Paramagnetospirillum magneticum (strain ATCC 700264 / AMB-1) (Magnetospirillum magneticum).